The sequence spans 519 residues: 3-octaprenyl-4-hydroxybenzoate carboxy-lyase (519 aa).

N177 is a binding site for Mn(2+). Residues 180–182, 194–196, and 199–200 contribute to the prenylated FMN site; these read IYR, RWL, and RG. A Mn(2+)-binding site is contributed by E243. Catalysis depends on D318, which acts as the Proton donor.

Belongs to the UbiD family. As to quaternary structure, homohexamer. Prenylated FMN serves as cofactor. The cofactor is Mn(2+).

The protein localises to the cell membrane. It carries out the reaction a 4-hydroxy-3-(all-trans-polyprenyl)benzoate + H(+) = a 2-(all-trans-polyprenyl)phenol + CO2. It functions in the pathway cofactor biosynthesis; ubiquinone biosynthesis. Catalyzes the decarboxylation of 3-octaprenyl-4-hydroxy benzoate to 2-octaprenylphenol, an intermediate step in ubiquinone biosynthesis. The sequence is that of 3-octaprenyl-4-hydroxybenzoate carboxy-lyase from Burkholderia pseudomallei (strain 1710b).